A 227-amino-acid polypeptide reads, in one-letter code: Phosphoribosylaminoimidazole-succinocarboxamide synthase (227 aa).

It belongs to the SAICAR synthetase family.

The enzyme catalyses 5-amino-1-(5-phospho-D-ribosyl)imidazole-4-carboxylate + L-aspartate + ATP = (2S)-2-[5-amino-1-(5-phospho-beta-D-ribosyl)imidazole-4-carboxamido]succinate + ADP + phosphate + 2 H(+). It functions in the pathway purine metabolism; IMP biosynthesis via de novo pathway; 5-amino-1-(5-phospho-D-ribosyl)imidazole-4-carboxamide from 5-amino-1-(5-phospho-D-ribosyl)imidazole-4-carboxylate: step 1/2. This Clostridium tetani (strain Massachusetts / E88) protein is Phosphoribosylaminoimidazole-succinocarboxamide synthase.